The chain runs to 813 residues: Phosphate transporter PHO1 homolog 3 (813 aa).

The SPX domain maps to 1–359 (MKFGKEFSSQ…SRDATKPYMK (359 aa)). The Cytoplasmic segment spans residues 1–411 (MKFGKEFSSQ…KAKRERHRIT (411 aa)). A disordered region spans residues 214–266 (EHMEAIQEGGSSRAGLMEDDEEDEDEQNETSVVSTGAIDNETTTSRMRGARPS). Over residues 230-241 (MEDDEEDEDEQN) the composition is skewed to acidic residues. Residues 412 to 432 (FSTGFSAGCVFSLIVALVAII) traverse the membrane as a helical segment. Over 433 to 450 (RTRNLLEMEGQKEYMNTM) the chain is Extracellular. A helical transmembrane segment spans residues 451-471 (FPLYSLFGFIVLHIIVYAANI). The Cytoplasmic segment spans residues 472 to 496 (YYWRRYRVNYSFIFGFKQGTELGYR). The chain crosses the membrane as a helical span at residues 497 to 517 (QVLLVGFSIGVLALLCVLANL). Residues 518–533 (DMEADPKTKAYQARTE) lie on the Extracellular side of the membrane. Residues 534 to 554 (ILPLILLAAMFIVLVLPFNYF) form a helical membrane-spanning segment. The Cytoplasmic portion of the chain corresponds to 555-684 (YRSSRFFFLT…SIQKGQVAWR (130 aa)). Residues 618–813 (KESDVYNTFF…NYDEDDDKDN (196 aa)) enclose the EXS domain. Residues 685–705 (VLAAVFSFIAAIFCTYWDFVH) traverse the membrane as a helical segment. Topologically, residues 706–729 (DWGLLNRTSKNRWLRDKLLVPQKK) are extracellular. A helical transmembrane segment spans residues 730–750 (VYFIAMVLNVLLRFAWIQTVL). At 751 to 813 (DFNFSFMHRQ…NYDEDDDKDN (63 aa)) the chain is on the cytoplasmic side.

It belongs to the SYG1 (TC 2.A.94) family. In terms of tissue distribution, expressed in vascular cylinder of roots, leaves and filaments. Expressed in receptacle and stigma apex.

Its subcellular location is the cell membrane. In terms of biological role, may transport inorganic phosphate (Pi). This Arabidopsis thaliana (Mouse-ear cress) protein is Phosphate transporter PHO1 homolog 3 (PHO1;H3).